A 103-amino-acid chain; its full sequence is Large ribosomal subunit protein uL24 (103 aa).

The protein belongs to the universal ribosomal protein uL24 family. As to quaternary structure, part of the 50S ribosomal subunit.

Functionally, one of two assembly initiator proteins, it binds directly to the 5'-end of the 23S rRNA, where it nucleates assembly of the 50S subunit. One of the proteins that surrounds the polypeptide exit tunnel on the outside of the subunit. The chain is Large ribosomal subunit protein uL24 (rplX) from Bacillus spizizenii (strain ATCC 23059 / NRRL B-14472 / W23) (Bacillus subtilis subsp. spizizenii).